The chain runs to 407 residues: Negative RAS protein regulator protein (407 aa).

Disordered regions lie at residues 51 to 94 (PRII…ARQI), 165 to 187 (HPSKKSKQKKKKSKQEAGSNLNF), and 241 to 273 (NNNNNNINNSNNSNNNNSNNINRNSNHSTNVFS). Low complexity predominate over residues 55 to 73 (SSSNSNSNSNSNSNSNSNS). The Myb-like domain occupies 90–158 (SARQIRKKWK…QCHDRFKVLY (69 aa)). Positions 165–177 (HPSKKSKQKKKKS) are enriched in basic residues. The segment covering 241 to 270 (NNNNNNINNSNNSNNNNSNNINRNSNHSTN) has biased composition (low complexity).

It is found in the nucleus. In terms of biological role, negative regulator of the Ras-cyclic AMP pathway. Negatively regulate the activity of normal but not mutationally activated Ras proteins. The down-regulatory effect of RPI1 requires the presence of one of the two Ras GTPase activators, IRA1 and IRA2. The chain is Negative RAS protein regulator protein (RPI1) from Saccharomyces cerevisiae (strain ATCC 204508 / S288c) (Baker's yeast).